A 211-amino-acid chain; its full sequence is Uracil phosphoribosyltransferase (211 aa).

5-phospho-alpha-D-ribose 1-diphosphate is bound by residues Arg-79, Arg-104, and 131-139; that span reads DPMLATGGS. Uracil is bound by residues Ile-196 and 201–203; that span reads GDA. Asp-202 contacts 5-phospho-alpha-D-ribose 1-diphosphate.

The protein belongs to the UPRTase family. The cofactor is Mg(2+).

The catalysed reaction is UMP + diphosphate = 5-phospho-alpha-D-ribose 1-diphosphate + uracil. Its pathway is pyrimidine metabolism; UMP biosynthesis via salvage pathway; UMP from uracil: step 1/1. With respect to regulation, allosterically activated by GTP. Functionally, catalyzes the conversion of uracil and 5-phospho-alpha-D-ribose 1-diphosphate (PRPP) to UMP and diphosphate. This chain is Uracil phosphoribosyltransferase, found in Lactococcus lactis subsp. cremoris (strain SK11).